We begin with the raw amino-acid sequence, 256 residues long: Trans-aconitate 2-methyltransferase (256 aa).

The protein belongs to the methyltransferase superfamily. Tam family.

Its subcellular location is the cytoplasm. The catalysed reaction is trans-aconitate + S-adenosyl-L-methionine = (E)-3-(methoxycarbonyl)pent-2-enedioate + S-adenosyl-L-homocysteine. Functionally, catalyzes the S-adenosylmethionine monomethyl esterification of trans-aconitate. The chain is Trans-aconitate 2-methyltransferase from Agrobacterium fabrum (strain C58 / ATCC 33970) (Agrobacterium tumefaciens (strain C58)).